Consider the following 422-residue polypeptide: Dihydroorotase (422 aa).

Zn(2+) contacts are provided by histidine 59 and histidine 61. Substrate is bound by residues 61-63 (HFR) and asparagine 93. Residues aspartate 150, histidine 177, and histidine 230 each coordinate Zn(2+). Position 276 (asparagine 276) interacts with substrate. Aspartate 303 lines the Zn(2+) pocket. The active site involves aspartate 303. Histidine 307 serves as a coordination point for substrate.

The protein belongs to the metallo-dependent hydrolases superfamily. DHOase family. Class I DHOase subfamily. The cofactor is Zn(2+).

The enzyme catalyses (S)-dihydroorotate + H2O = N-carbamoyl-L-aspartate + H(+). Its pathway is pyrimidine metabolism; UMP biosynthesis via de novo pathway; (S)-dihydroorotate from bicarbonate: step 3/3. Its function is as follows. Catalyzes the reversible cyclization of carbamoyl aspartate to dihydroorotate. This Streptococcus thermophilus (strain CNRZ 1066) protein is Dihydroorotase.